Here is a 438-residue protein sequence, read N- to C-terminus: Ubiquitin carboxyl-terminal hydrolase 27 (438 aa).

A USP domain is found at 78 to 421; that stretch reads RGLINLGNTC…EGYLLFYHKQ (344 aa). Cys-87 (nucleophile) is an active-site residue. The Proton acceptor role is filled by His-380.

It belongs to the peptidase C19 family. As to quaternary structure, interacts with phosphorylated BCL2L11 isoform BIMEL; this interaction leads to BCL2L11 deubiquitination and stabilization.

The protein resides in the cytoplasm. Its subcellular location is the cytosol. The protein localises to the nucleus. It carries out the reaction Thiol-dependent hydrolysis of ester, thioester, amide, peptide and isopeptide bonds formed by the C-terminal Gly of ubiquitin (a 76-residue protein attached to proteins as an intracellular targeting signal).. Deubiquitinase involved in innate antiviral immunity by mediating deubiquitination of CGAS and RIGI. Negatively regulates RIGI by mediating 'Lys-63'-linked deubiquitination of RIGI, inhibiting type I interferon signaling. Also regulates 'Lys-63'-linked ubiquitination level of MDA5/IFIH1. Acts as a positive regulator of the cGAS-STING pathway by catalyzing 'Lys-48'-linked deubiquitination of CGAS, thereby promoting its stabilization. Can reduce the levels of BCL2L11/BIM ubiquitination and stabilize BCL2L11 in response to the RAF-MAPK-degradation signal. By acting on BCL2L11 levels, may counteract the anti-apoptotic effects of MAPK activity. In Homo sapiens (Human), this protein is Ubiquitin carboxyl-terminal hydrolase 27.